The primary structure comprises 448 residues: UDP-N-acetylmuramoylalanine--D-glutamate ligase (448 aa).

Position 112-118 (112-118 (GSNAKST)) interacts with ATP.

Belongs to the MurCDEF family.

The protein localises to the cytoplasm. It catalyses the reaction UDP-N-acetyl-alpha-D-muramoyl-L-alanine + D-glutamate + ATP = UDP-N-acetyl-alpha-D-muramoyl-L-alanyl-D-glutamate + ADP + phosphate + H(+). It participates in cell wall biogenesis; peptidoglycan biosynthesis. In terms of biological role, cell wall formation. Catalyzes the addition of glutamate to the nucleotide precursor UDP-N-acetylmuramoyl-L-alanine (UMA). This Acinetobacter baumannii (strain ACICU) protein is UDP-N-acetylmuramoylalanine--D-glutamate ligase.